We begin with the raw amino-acid sequence, 115 residues long: NAD(P)H-quinone oxidoreductase subunit M (115 aa).

It belongs to the complex I NdhM subunit family. NDH-1 can be composed of about 15 different subunits; different subcomplexes with different compositions have been identified which probably have different functions.

It localises to the cellular thylakoid membrane. It catalyses the reaction a plastoquinone + NADH + (n+1) H(+)(in) = a plastoquinol + NAD(+) + n H(+)(out). The enzyme catalyses a plastoquinone + NADPH + (n+1) H(+)(in) = a plastoquinol + NADP(+) + n H(+)(out). In terms of biological role, NDH-1 shuttles electrons from an unknown electron donor, via FMN and iron-sulfur (Fe-S) centers, to quinones in the respiratory and/or the photosynthetic chain. The immediate electron acceptor for the enzyme in this species is believed to be plastoquinone. Couples the redox reaction to proton translocation, and thus conserves the redox energy in a proton gradient. Cyanobacterial NDH-1 also plays a role in inorganic carbon-concentration. The protein is NAD(P)H-quinone oxidoreductase subunit M of Prochlorococcus marinus (strain AS9601).